A 238-amino-acid polypeptide reads, in one-letter code: Purine nucleoside phosphorylase DeoD-type (238 aa).

His4 contacts a purine D-ribonucleoside. Phosphate contacts are provided by residues Gly20, Arg24, Arg43, and 87–90 (RVGT). A purine D-ribonucleoside is bound by residues 179-181 (EME) and 203-204 (SN).

The protein belongs to the PNP/UDP phosphorylase family. Homohexamer; trimer of homodimers.

It catalyses the reaction a purine D-ribonucleoside + phosphate = a purine nucleobase + alpha-D-ribose 1-phosphate. It carries out the reaction a purine 2'-deoxy-D-ribonucleoside + phosphate = a purine nucleobase + 2-deoxy-alpha-D-ribose 1-phosphate. In terms of biological role, catalyzes the reversible phosphorolytic breakdown of the N-glycosidic bond in the beta-(deoxy)ribonucleoside molecules, with the formation of the corresponding free purine bases and pentose-1-phosphate. The protein is Purine nucleoside phosphorylase DeoD-type of Lacticaseibacillus casei (strain BL23) (Lactobacillus casei).